The primary structure comprises 1115 residues: PAN2-PAN3 deadenylation complex catalytic subunit PAN2 (1115 aa).

WD repeat units lie at residues N27 to Y66, A112 to D153, L155 to S194, A197 to R236, and H295 to F334. Residues T337–Y473 form a linker region. A USP domain is found at E474–A855. Residues C660, H662, C713, and C716 each coordinate Zn(2+). In terms of domain architecture, Exonuclease spans V907–Y1079. Residues D910, E912, D1020, and D1071 each coordinate a divalent metal cation.

Belongs to the peptidase C19 family. PAN2 subfamily. Forms a heterotrimer with an asymmetric homodimer of the regulatory subunit PAN3 to form the poly(A)-nuclease (PAN) deadenylation complex. It depends on a divalent metal cation as a cofactor.

It is found in the cytoplasm. It carries out the reaction Exonucleolytic cleavage of poly(A) to 5'-AMP.. With respect to regulation, positively regulated by the regulatory subunit PAN3. Negatively regulated by PAB1-binding protein PBP1. Inhibited under stress conditions. Inhibition of deadenylation under stress increases mRNA stability, which may be a mechanism to retain the majority of the cytoplasmic pool of mRNAs for later reuse and recovery from stress. Catalytic subunit of the poly(A)-nuclease (PAN) deadenylation complex, one of two cytoplasmic mRNA deadenylases involved in mRNA turnover. PAN specifically shortens poly(A) tails of RNA and the activity is stimulated by poly(A)-binding protein PAB1. PAN deadenylation is followed by rapid degradation of the shortened mRNA tails by the CCR4-NOT complex. Deadenylated mRNAs are then degraded by two alternative mechanisms, namely exosome-mediated 3'-5' exonucleolytic degradation, or deadenylation-dependent mRNA decaping by DCP1-DCP2 and subsequent 5'-3' exonucleolytic degradation by XRN1. May also be involved in post-transcriptional maturation of mRNA poly(A) tails, trimming the tails from their synthesized length to the slightly shorter, apparently messenger-specific length found on newly exported mRNAs. PAN cooperates with protein kinase DUN1 in the regulation of RAD5 mRNA levels and cell survival in response to replicational stress. The sequence is that of PAN2-PAN3 deadenylation complex catalytic subunit PAN2 from Saccharomyces cerevisiae (strain ATCC 204508 / S288c) (Baker's yeast).